A 55-amino-acid polypeptide reads, in one-letter code: Large ribosomal subunit protein bL33 (55 aa).

The protein belongs to the bacterial ribosomal protein bL33 family.

The chain is Large ribosomal subunit protein bL33 from Sodalis glossinidius (strain morsitans).